The sequence spans 356 residues: Protein disulfide isomerase crld-1 (356 aa).

Residues 1–17 (MSRILLLLAVLIGATSQ) form the signal peptide. At 18 to 299 (KEVTIKNEKC…DRPFMPIDQQ (282 aa)) the chain is on the lumenal side. A CXXC motif is present at residues 27–30 (CRTC). C27 and C30 are disulfide-bonded. An N-linked (GlcNAc...) asparagine glycan is attached at N122. Positions 150-188 (GLSEKADVCFGKGSCHGDGSREGSGKCKCETGYTGNLCR) constitute an EGF-like 1 domain. Disulfide bonds link C158-C176, C178-C187, C245-C258, C251-C267, and C269-C281. The EGF-like 2; calcium-binding domain occupies 241-282 (DVNECQNESACTKEHEICVNTVGSFKCECKEGYKKDDEQNCQ). A glycan (N-linked (GlcNAc...) asparagine) is linked at N247. Residues 300-317 (LKLIAFSSLIIIITFVVW) form a helical membrane-spanning segment. Residues 318-321 (HGSP) lie on the Cytoplasmic side of the membrane. A helical transmembrane segment spans residues 322–341 (VLYVLTGITIVALILVDLYV). The Lumenal portion of the chain corresponds to 342–356 (NPDTIPDEAKRFLGY).

This sequence belongs to the CRELD family. Interacts with unc-29. In terms of tissue distribution, isoforms a: Widely expressed in tissues including body wall muscles, neurons, pharynx, hypodermis, seam cells, intestine and gonad. Isoform b: Widely expressed in tissues including body wall muscles, neurons, pharynx, hypodermis, seam cells, intestine and gonad.

The protein localises to the endoplasmic reticulum membrane. Its subcellular location is the endoplasmic reticulum lumen. The enzyme catalyses Catalyzes the rearrangement of -S-S- bonds in proteins.. In terms of biological role, protein disulfide isomerase which associates with the unc-29 subunit of levamisole-sensitive nicotinic acetylcholine receptors (L-nAChR) to promote L-nAChR assembly in the endoplasmic reticulum at neuromuscular junctions. Its function is as follows. Promotes L-nAChR assembly in the endoplasmic reticulum at neuromuscular junctions. The protein is Protein disulfide isomerase crld-1 of Caenorhabditis elegans.